The primary structure comprises 395 residues: Putative 8-amino-7-oxononanoate synthase (395 aa).

Arginine 23 contributes to the substrate binding site. Residue 110–111 (GY) participates in pyridoxal 5'-phosphate binding. Histidine 135 serves as a coordination point for substrate. Pyridoxal 5'-phosphate is bound by residues serine 182, 207-210 (DEAH), and 239-242 (TFSK). N6-(pyridoxal phosphate)lysine is present on lysine 242. Threonine 356 is a binding site for substrate.

The protein belongs to the class-II pyridoxal-phosphate-dependent aminotransferase family. BioF subfamily. As to quaternary structure, homodimer. Pyridoxal 5'-phosphate serves as cofactor.

It catalyses the reaction 6-carboxyhexanoyl-[ACP] + L-alanine + H(+) = (8S)-8-amino-7-oxononanoate + holo-[ACP] + CO2. It functions in the pathway cofactor biosynthesis; biotin biosynthesis. Catalyzes the decarboxylative condensation of pimeloyl-[acyl-carrier protein] and L-alanine to produce 8-amino-7-oxononanoate (AON), [acyl-carrier protein], and carbon dioxide. The polypeptide is Putative 8-amino-7-oxononanoate synthase (bioF) (Bacillus cereus (strain ZK / E33L)).